A 658-amino-acid chain; its full sequence is Probable Xaa-Pro aminopeptidase P (658 aa).

The Mn(2+) site is built by Asp-449, Asp-460, Glu-558, and Glu-572.

It belongs to the peptidase M24B family. Requires Mn(2+) as cofactor.

It catalyses the reaction Release of any N-terminal amino acid, including proline, that is linked to proline, even from a dipeptide or tripeptide.. In terms of biological role, catalyzes the removal of a penultimate prolyl residue from the N-termini of peptides. This Aspergillus clavatus (strain ATCC 1007 / CBS 513.65 / DSM 816 / NCTC 3887 / NRRL 1 / QM 1276 / 107) protein is Probable Xaa-Pro aminopeptidase P (ampp).